Consider the following 138-residue polypeptide: Transcription antitermination protein NusB (138 aa).

This sequence belongs to the NusB family.

Its function is as follows. Involved in transcription antitermination. Required for transcription of ribosomal RNA (rRNA) genes. Binds specifically to the boxA antiterminator sequence of the ribosomal RNA (rrn) operons. The chain is Transcription antitermination protein NusB from Geobacter sulfurreducens (strain ATCC 51573 / DSM 12127 / PCA).